We begin with the raw amino-acid sequence, 210 residues long: 7-cyano-7-deazaguanine synthase 2 (210 aa).

10–20 (HSGGMDSTTCL) lines the ATP pocket. Residues cysteine 180, cysteine 193, cysteine 196, and cysteine 199 each coordinate Zn(2+).

Belongs to the QueC family. The cofactor is Zn(2+).

It carries out the reaction 7-carboxy-7-deazaguanine + NH4(+) + ATP = 7-cyano-7-deazaguanine + ADP + phosphate + H2O + H(+). The protein operates within purine metabolism; 7-cyano-7-deazaguanine biosynthesis. Catalyzes the ATP-dependent conversion of 7-carboxy-7-deazaguanine (CDG) to 7-cyano-7-deazaguanine (preQ(0)). In Rhodopseudomonas palustris (strain HaA2), this protein is 7-cyano-7-deazaguanine synthase 2.